The primary structure comprises 1497 residues: DNA-directed RNA polymerase subunit beta (1497 aa).

It belongs to the RNA polymerase beta chain family. In terms of assembly, the RNAP catalytic core consists of 2 alpha, 1 beta, 1 beta' and 1 omega subunit. When a sigma factor is associated with the core the holoenzyme is formed, which can initiate transcription.

It catalyses the reaction RNA(n) + a ribonucleoside 5'-triphosphate = RNA(n+1) + diphosphate. In terms of biological role, DNA-dependent RNA polymerase catalyzes the transcription of DNA into RNA using the four ribonucleoside triphosphates as substrates. This Trichlorobacter lovleyi (strain ATCC BAA-1151 / DSM 17278 / SZ) (Geobacter lovleyi) protein is DNA-directed RNA polymerase subunit beta.